The sequence spans 332 residues: Protoheme IX farnesyltransferase (332 aa).

7 helical membrane-spanning segments follow: residues 63–83 (LICT…LNCL), 109–129 (TVFL…ISGV), 132–152 (LAAG…TIIL), 160–180 (IVFG…AATG), 188–208 (WLFG…AILL), 245–265 (ILGV…LLPF), and 286–306 (AKGL…LLLI).

It belongs to the UbiA prenyltransferase family. Protoheme IX farnesyltransferase subfamily.

It localises to the cell inner membrane. The enzyme catalyses heme b + (2E,6E)-farnesyl diphosphate + H2O = Fe(II)-heme o + diphosphate. Its pathway is porphyrin-containing compound metabolism; heme O biosynthesis; heme O from protoheme: step 1/1. Functionally, converts heme B (protoheme IX) to heme O by substitution of the vinyl group on carbon 2 of heme B porphyrin ring with a hydroxyethyl farnesyl side group. The sequence is that of Protoheme IX farnesyltransferase from Prochlorococcus marinus (strain MIT 9515).